The sequence spans 164 residues: Cell division protein SepF (164 aa).

Residues 21 to 71 (YQQGQQPAQQQQSPVQAVPTPVPAPQQQAKRAPVTPLHKPSTTTRNAAPAE) are disordered. The span at 22–49 (QQGQQPAQQQQSPVQAVPTPVPAPQQQA) shows a compositional bias: low complexity.

This sequence belongs to the SepF family. Homodimer. Interacts with FtsZ.

The protein localises to the cytoplasm. Functionally, cell division protein that is part of the divisome complex and is recruited early to the Z-ring. Probably stimulates Z-ring formation, perhaps through the cross-linking of FtsZ protofilaments. Its function overlaps with FtsA. This is Cell division protein SepF from Clavibacter sepedonicus (Clavibacter michiganensis subsp. sepedonicus).